The primary structure comprises 89 residues: Small ribosomal subunit protein bS20 (89 aa).

It belongs to the bacterial ribosomal protein bS20 family.

Functionally, binds directly to 16S ribosomal RNA. This Helicobacter pylori (strain Shi470) protein is Small ribosomal subunit protein bS20.